Here is a 264-residue protein sequence, read N- to C-terminus: MSPARNDKPFTLAGRTYASRLLVGTGKYKDLEETRQAIEASGAEIVTVAVRRTNIGQNPGEPNLLDVINPARYTILPNTAGCYTAEEAVRTCRLARELLDGHKLVKLEVLADQKTLFPNVIETLKAAEVLVKDGFDVMVYTSDDPIIARQLAEMGCIAVMPLAGLIGTGLGICNPYNLRIILEEATVPVLVDAGVGTASDATIAMELGCEAVLMNSAIAHAQDPVLMARAMKHAIEAGRLAWLAGRMPKKLYASASSPLEGLIR.

K106 acts as the Schiff-base intermediate with DXP in catalysis. Residues G167, 193–194 (AG), and 215–216 (NS) contribute to the 1-deoxy-D-xylulose 5-phosphate site.

The protein belongs to the ThiG family. Homotetramer. Forms heterodimers with either ThiH or ThiS.

It is found in the cytoplasm. It catalyses the reaction [ThiS sulfur-carrier protein]-C-terminal-Gly-aminoethanethioate + 2-iminoacetate + 1-deoxy-D-xylulose 5-phosphate = [ThiS sulfur-carrier protein]-C-terminal Gly-Gly + 2-[(2R,5Z)-2-carboxy-4-methylthiazol-5(2H)-ylidene]ethyl phosphate + 2 H2O + H(+). It participates in cofactor biosynthesis; thiamine diphosphate biosynthesis. Catalyzes the rearrangement of 1-deoxy-D-xylulose 5-phosphate (DXP) to produce the thiazole phosphate moiety of thiamine. Sulfur is provided by the thiocarboxylate moiety of the carrier protein ThiS. In vitro, sulfur can be provided by H(2)S. The sequence is that of Thiazole synthase from Azotobacter vinelandii (strain DJ / ATCC BAA-1303).